Consider the following 508-residue polypeptide: Photosystem II CP47 reaction center protein (508 aa).

A run of 6 helical transmembrane segments spans residues 21-36 (AVHIMHTALVSGWAGS), 101-115 (IVFSGLCFLAAIWHW), 140-156 (GIHLFLAGVACFGFGAF), 203-218 (IAAGTLGILAGLFHLS), 237-252 (VLSSSIAAVFFAAFVV), and 457-472 (TFALLFFFGHIWHGAR).

Belongs to the PsbB/PsbC family. PsbB subfamily. PSII is composed of 1 copy each of membrane proteins PsbA, PsbB, PsbC, PsbD, PsbE, PsbF, PsbH, PsbI, PsbJ, PsbK, PsbL, PsbM, PsbT, PsbX, PsbY, PsbZ, Psb30/Ycf12, at least 3 peripheral proteins of the oxygen-evolving complex and a large number of cofactors. It forms dimeric complexes. Binds multiple chlorophylls. PSII binds additional chlorophylls, carotenoids and specific lipids. is required as a cofactor.

The protein localises to the plastid. The protein resides in the chloroplast thylakoid membrane. One of the components of the core complex of photosystem II (PSII). It binds chlorophyll and helps catalyze the primary light-induced photochemical processes of PSII. PSII is a light-driven water:plastoquinone oxidoreductase, using light energy to abstract electrons from H(2)O, generating O(2) and a proton gradient subsequently used for ATP formation. The protein is Photosystem II CP47 reaction center protein of Hordeum vulgare (Barley).